The chain runs to 481 residues: Argininosuccinate lyase (481 aa).

The protein belongs to the lyase 1 family. Argininosuccinate lyase subfamily.

The protein localises to the cytoplasm. It carries out the reaction 2-(N(omega)-L-arginino)succinate = fumarate + L-arginine. It functions in the pathway amino-acid biosynthesis; L-arginine biosynthesis; L-arginine from L-ornithine and carbamoyl phosphate: step 3/3. In Kineococcus radiotolerans (strain ATCC BAA-149 / DSM 14245 / SRS30216), this protein is Argininosuccinate lyase.